Reading from the N-terminus, the 248-residue chain is tRNA pseudouridine synthase A (248 aa).

Residue Asp-52 is the Nucleophile of the active site. Residue Tyr-113 coordinates substrate.

It belongs to the tRNA pseudouridine synthase TruA family. In terms of assembly, homodimer.

The catalysed reaction is uridine(38/39/40) in tRNA = pseudouridine(38/39/40) in tRNA. Functionally, formation of pseudouridine at positions 38, 39 and 40 in the anticodon stem and loop of transfer RNAs. The polypeptide is tRNA pseudouridine synthase A (Mesorhizobium japonicum (strain LMG 29417 / CECT 9101 / MAFF 303099) (Mesorhizobium loti (strain MAFF 303099))).